Consider the following 161-residue polypeptide: UPF0506 protein SJCHGC02965 (161 aa).

The signal sequence occupies residues 1–13 (QLLILCLVTVINS). N-linked (GlcNAc...) asparagine glycosylation is found at Asn-15, Asn-19, Asn-31, Asn-43, Asn-47, Asn-59, Asn-63, Asn-75, and Asn-121. 3 disulfide bridges follow: Cys-127–Cys-141, Cys-134–Cys-145, and Cys-140–Cys-150.

It belongs to the UPF0506 family.

It is found in the secreted. This Schistosoma japonicum (Blood fluke) protein is UPF0506 protein SJCHGC02965.